Consider the following 447-residue polypeptide: Transducin beta-like protein 2 (447 aa).

Residues 38-72 (RSGRPACQKANGFPPDKSSGSKKQKQYQRIRKEKP) are disordered. The segment covering 57–69 (GSKKQKQYQRIRK) has biased composition (basic residues). 7 WD repeats span residues 88–127 (SHSG…QREH), 134–174 (VELD…DGGY), 186–226 (KHKA…STIN), 228–267 (NQMN…GEFQ), 277–316 (GHSA…KKKQ), 329–367 (AAGA…KEEC), and 371–409 (VHGE…RAMV). Residue Lys-168 forms a Glycyl lysine isopeptide (Lys-Gly) (interchain with G-Cter in SUMO2) linkage. A Phosphothreonine; by ATM or ATR modification is found at Thr-433.

This Homo sapiens (Human) protein is Transducin beta-like protein 2 (TBL2).